The primary structure comprises 192 residues: Interleukin-18 (192 aa).

A propeptide spanning residues 1-35 is cleaved from the precursor; sequence MAAEPVEDNCISFVEMKFINNTLYFVAENGDLESD.

It belongs to the IL-1 family. As to quaternary structure, forms a ternary complex with ligand-binding receptor subunit IL18R1 and signaling receptor subunit IL18RAP at the plasma membrane. Mature IL18 first binds to IL18R1 forming a low affinity binary complex, which then interacts with IL18RAP to form a high affinity ternary complex that signals inside the cell. Interacts with cargo receptor TMED10; the interaction mediates the translocation from the cytoplasm into the ERGIC (endoplasmic reticulum-Golgi intermediate compartment) and thereby secretion. Post-translationally, the pro-IL-18 precursor is processed by CASP1, CASP4 or CASP5 to yield its mature, active form. The pro-IL-18 precursor features autoinhibitory interactions between the propeptide and the post-cleavage-site region, preventing recognition by the IL18R1 receptor. Processing by CASP1, CASP4 or CASP5 induces conformational changes to generate critical receptor-binding sites. The mature form is then secreted and released in the extracellular milieu by passing through the gasdermin-D (GSDMD) pore. In contrast, cleavage by CASP3 inactivates IL18.

The protein localises to the cytoplasm. It localises to the cytosol. It is found in the secreted. Functionally, pro-inflammatory cytokine primarily involved in epithelial barrier repair, polarized T-helper 1 (Th1) cell and natural killer (NK) cell immune responses. Upon binding to IL18R1 and IL18RAP, forms a signaling ternary complex which activates NF-kappa-B, triggering synthesis of inflammatory mediators. Synergizes with IL12/interleukin-12 to induce IFNG synthesis from T-helper 1 (Th1) cells and natural killer (NK) cells. Involved in transduction of inflammation downstream of pyroptosis: its mature form is specifically released in the extracellular milieu by passing through the gasdermin-D (GSDMD) pore. This Capra hircus (Goat) protein is Interleukin-18 (IL18).